We begin with the raw amino-acid sequence, 91 residues long: Acylphosphatase (91 aa).

An Acylphosphatase-like domain is found at 5 to 91 (RAHVFVSGRV…EGVDGFEVRW (87 aa)). Residues Arg-20 and Asn-38 contribute to the active site.

Belongs to the acylphosphatase family.

The enzyme catalyses an acyl phosphate + H2O = a carboxylate + phosphate + H(+). This Haloarcula marismortui (strain ATCC 43049 / DSM 3752 / JCM 8966 / VKM B-1809) (Halobacterium marismortui) protein is Acylphosphatase (acyP).